The following is a 492-amino-acid chain: Endoglycoceramidase I (492 aa).

The N-terminal stretch at 1–14 (MRKTVVAFAAAIAA) is a signal peptide. Cys-15 carries the N-palmitoyl cysteine lipid modification. Cys-15 carries S-diacylglycerol cysteine lipidation. Substrate-binding positions include Lys-61, Asp-62, 131-133 (HQD), and 213-214 (NE). The active-site Proton donor is Glu-214. A disulfide bond links Cys-224 and Cys-229. The substrate site is built by Asn-265, Gln-298, and Tyr-302. Cys-294 and Cys-313 are disulfide-bonded. The Nucleophile role is filled by Glu-339. Trp-365 lines the substrate pocket. Residues 467-492 (NRPGSAGAEVPDGPIETSSSGSSGSS) form a disordered region.

This sequence belongs to the glycosyl hydrolase 5 (cellulase A) family.

The protein localises to the secreted. Its subcellular location is the membrane. The catalysed reaction is an oligoglycosyl-(1-&gt;4)-beta-D-glucosyl-(1&lt;-&gt;1)-ceramide + H2O = an oligoglycosyl-(1-&gt;4)-D-glucose + an N-acyl-sphingoid base. It catalyses the reaction a ganglioside GM3 + H2O = N-acetyl-alpha-neuraminosyl-(2-&gt;3)-beta-D-galactosyl-(1-&gt;4)-D-glucose + an N-acyl-sphingoid base. The enzyme catalyses a ganglioside GM1 + H2O = beta-D-Gal-(1-&gt;3)-beta-D-GalNAc-(1-&gt;4)-[alpha-Neu5Ac-(2-&gt;3)]-beta-D-Gal-(1-&gt;4)-D-Glc + an N-acyl-sphingoid base. It carries out the reaction a ganglioside Fuc-GM1 + H2O = alpha-Fuc-(1-&gt;2)-beta-Gal-(1-&gt;3)-beta-GalNAc-(1-&gt;4)-[alpha-Neu5Ac-(2-&gt;3)]-beta-Gal-(1-&gt;4)-Glc + an N-acyl-sphingoid base. The catalysed reaction is a beta-D-galactosyl-(1-&gt;4)-beta-D-glucosyl-(1&lt;-&gt;1)-ceramide + H2O = lactose + an N-acyl-sphingoid base. Its function is as follows. Hydrolyzes glycosphingolipids; exhibits broad substrate specificity including monosialodihexosylganglioside (GM3), monosialotetrahexosylganglioside (GM1), fucosyl-GM1, lactosylceramide, globotriosylceramide, globotetraosylceramide, ganglioside GD1a, and ganglioside GD1b. No activity towards glucosylceramide and galactosylceramide. The polypeptide is Endoglycoceramidase I (Rhodococcus hoagii (strain 103S) (Rhodococcus equi)).